Consider the following 463-residue polypeptide: ATP-dependent protease ATPase subunit HslU (463 aa).

ATP is bound by residues Ile19, 61 to 66 (GVGKTE), Asp277, Glu341, and Arg413.

It belongs to the ClpX chaperone family. HslU subfamily. As to quaternary structure, a double ring-shaped homohexamer of HslV is capped on each side by a ring-shaped HslU homohexamer. The assembly of the HslU/HslV complex is dependent on binding of ATP.

It is found in the cytoplasm. ATPase subunit of a proteasome-like degradation complex; this subunit has chaperone activity. The binding of ATP and its subsequent hydrolysis by HslU are essential for unfolding of protein substrates subsequently hydrolyzed by HslV. HslU recognizes the N-terminal part of its protein substrates and unfolds these before they are guided to HslV for hydrolysis. The chain is ATP-dependent protease ATPase subunit HslU from Bacillus cereus (strain AH187).